We begin with the raw amino-acid sequence, 216 residues long: Large ribosomal subunit protein uL3 (216 aa).

At Gln157 the chain carries N5-methylglutamine.

The protein belongs to the universal ribosomal protein uL3 family. In terms of assembly, part of the 50S ribosomal subunit. Forms a cluster with proteins L14 and L19. In terms of processing, methylated by PrmB.

In terms of biological role, one of the primary rRNA binding proteins, it binds directly near the 3'-end of the 23S rRNA, where it nucleates assembly of the 50S subunit. The polypeptide is Large ribosomal subunit protein uL3 (Stenotrophomonas maltophilia (strain R551-3)).